Here is a 267-residue protein sequence, read N- to C-terminus: 4-hydroxy-tetrahydrodipicolinate reductase (267 aa).

NAD(+) contacts are provided by residues 10 to 15 (GCGGRM) and glutamate 36. Residue arginine 37 coordinates NADP(+). Residues 99 to 101 (GTT) and 123 to 126 (APNF) each bind NAD(+). Residue histidine 156 is the Proton donor/acceptor of the active site. Histidine 157 provides a ligand contact to (S)-2,3,4,5-tetrahydrodipicolinate. The active-site Proton donor is the lysine 160. 166–167 (GT) contributes to the (S)-2,3,4,5-tetrahydrodipicolinate binding site.

Belongs to the DapB family.

The protein localises to the cytoplasm. It catalyses the reaction (S)-2,3,4,5-tetrahydrodipicolinate + NAD(+) + H2O = (2S,4S)-4-hydroxy-2,3,4,5-tetrahydrodipicolinate + NADH + H(+). It carries out the reaction (S)-2,3,4,5-tetrahydrodipicolinate + NADP(+) + H2O = (2S,4S)-4-hydroxy-2,3,4,5-tetrahydrodipicolinate + NADPH + H(+). It functions in the pathway amino-acid biosynthesis; L-lysine biosynthesis via DAP pathway; (S)-tetrahydrodipicolinate from L-aspartate: step 4/4. Functionally, catalyzes the conversion of 4-hydroxy-tetrahydrodipicolinate (HTPA) to tetrahydrodipicolinate. In Laribacter hongkongensis (strain HLHK9), this protein is 4-hydroxy-tetrahydrodipicolinate reductase.